Reading from the N-terminus, the 179-residue chain is Large ribosomal subunit protein uL6 (179 aa).

Belongs to the universal ribosomal protein uL6 family. As to quaternary structure, part of the 50S ribosomal subunit.

This protein binds to the 23S rRNA, and is important in its secondary structure. It is located near the subunit interface in the base of the L7/L12 stalk, and near the tRNA binding site of the peptidyltransferase center. This is Large ribosomal subunit protein uL6 from Rhodococcus jostii (strain RHA1).